Here is a 451-residue protein sequence, read N- to C-terminus: Tubulin alpha-2 chain (451 aa).

Glutamine 11 provides a ligand contact to GTP. Lysine 40 bears the N6-acetyllysine mark. 7 residues coordinate GTP: glutamate 71, serine 140, glycine 144, threonine 145, threonine 179, asparagine 206, and asparagine 228. Glutamate 71 provides a ligand contact to Mg(2+). Residue glutamate 254 is part of the active site. Residues 432 to 451 (YEEVGIDTADGEDDEEANDY) form a disordered region.

This sequence belongs to the tubulin family. Dimer of alpha and beta chains. A typical microtubule is a hollow water-filled tube with an outer diameter of 25 nm and an inner diameter of 15 nM. Alpha-beta heterodimers associate head-to-tail to form protofilaments running lengthwise along the microtubule wall with the beta-tubulin subunit facing the microtubule plus end conferring a structural polarity. Microtubules usually have 13 protofilaments but different protofilament numbers can be found in some organisms and specialized cells. The cofactor is Mg(2+). Undergoes a tyrosination/detyrosination cycle, the cyclic removal and re-addition of a C-terminal tyrosine residue by the enzymes tubulin tyrosine carboxypeptidase (TTCP) and tubulin tyrosine ligase (TTL), respectively. In terms of processing, acetylation of alpha chains at Lys-40 stabilizes microtubules and affects affinity and processivity of microtubule motors. This modification has a role in multiple cellular functions, ranging from cell motility, cell cycle progression or cell differentiation to intracellular trafficking and signaling.

The protein localises to the cytoplasm. It localises to the cytoskeleton. The catalysed reaction is GTP + H2O = GDP + phosphate + H(+). In terms of biological role, tubulin is the major constituent of microtubules, a cylinder consisting of laterally associated linear protofilaments composed of alpha- and beta-tubulin heterodimers. Microtubules grow by the addition of GTP-tubulin dimers to the microtubule end, where a stabilizing cap forms. Below the cap, tubulin dimers are in GDP-bound state, owing to GTPase activity of alpha-tubulin. The polypeptide is Tubulin alpha-2 chain (Homarus americanus (American lobster)).